The sequence spans 286 residues: DNA-directed RNA polymerase subunit Rpo3 (286 aa).

The protein belongs to the archaeal Rpo3/eukaryotic RPB3 RNA polymerase subunit family. Part of the RNA polymerase complex.

It localises to the cytoplasm. The catalysed reaction is RNA(n) + a ribonucleoside 5'-triphosphate = RNA(n+1) + diphosphate. In terms of biological role, DNA-dependent RNA polymerase (RNAP) catalyzes the transcription of DNA into RNA using the four ribonucleoside triphosphates as substrates. The sequence is that of DNA-directed RNA polymerase subunit Rpo3 from Aeropyrum pernix (strain ATCC 700893 / DSM 11879 / JCM 9820 / NBRC 100138 / K1).